The sequence spans 459 residues: Putrescine aminotransferase (459 aa).

Residues 150–151 (GT) and glutamine 274 each bind pyridoxal 5'-phosphate. Lysine 300 bears the N6-(pyridoxal phosphate)lysine mark. Threonine 332 provides a ligand contact to pyridoxal 5'-phosphate.

It belongs to the class-III pyridoxal-phosphate-dependent aminotransferase family. Putrescine aminotransferase subfamily. Pyridoxal 5'-phosphate is required as a cofactor.

The catalysed reaction is an alkane-alpha,omega-diamine + 2-oxoglutarate = an omega-aminoaldehyde + L-glutamate. The enzyme catalyses putrescine + 2-oxoglutarate = 1-pyrroline + L-glutamate + H2O. It catalyses the reaction cadaverine + 2-oxoglutarate = 5-aminopentanal + L-glutamate. Its pathway is amine and polyamine degradation; putrescine degradation; 4-aminobutanal from putrescine (transaminase route): step 1/1. Functionally, catalyzes the aminotransferase reaction from putrescine to 2-oxoglutarate, leading to glutamate and 4-aminobutanal, which spontaneously cyclizes to form 1-pyrroline. This is the first step in one of two pathways for putrescine degradation, where putrescine is converted into 4-aminobutanoate (gamma-aminobutyrate or GABA) via 4-aminobutanal. Also functions as a cadaverine transaminase in a a L-lysine degradation pathway to succinate that proceeds via cadaverine, glutarate and L-2-hydroxyglutarate. This chain is Putrescine aminotransferase, found in Escherichia fergusonii (strain ATCC 35469 / DSM 13698 / CCUG 18766 / IAM 14443 / JCM 21226 / LMG 7866 / NBRC 102419 / NCTC 12128 / CDC 0568-73).